The chain runs to 109 residues: Small ribosomal subunit protein uS10c (109 aa).

Belongs to the universal ribosomal protein uS10 family. Part of the 30S ribosomal subunit.

Its subcellular location is the plastid. It is found in the chloroplast. Involved in the binding of tRNA to the ribosomes. The polypeptide is Small ribosomal subunit protein uS10c (Cyanidium caldarium (Red alga)).